The chain runs to 232 residues: Thrombin-like enzyme bothrombin (232 aa).

Positions 1–223 (VIGGDECDIN…YLPWIQSIIA (223 aa)) constitute a Peptidase S1 domain. 6 disulfides stabilise this stretch: Cys7/Cys139, Cys26/Cys42, Cys74/Cys230, Cys118/Cys184, Cys150/Cys163, and Cys174/Cys199. Residues His41 and Asp86 each act as charge relay system in the active site. Residues Asn98 and Asn146 are each glycosylated (N-linked (GlcNAc...) asparagine). Ser178 (charge relay system) is an active-site residue. Residue Asn225 is glycosylated (N-linked (GlcNAc...) asparagine).

Belongs to the peptidase S1 family. Snake venom subfamily. Monomer. As to expression, expressed by the venom gland.

Its subcellular location is the secreted. The enzyme catalyses Selective cleavage of Arg-|-Xaa bond in fibrinogen, to form fibrin, and release fibrinopeptide A. The specificity of further degradation of fibrinogen varies with species origin of the enzyme.. With respect to regulation, inhibited by diisopropylfluorophosphate (DFP), but not by hirudin. Thrombin-like snake venom serine protease that clots fibrinogen by releasing fibrinopeptide A from the alpha chain of fibrinogen (FGA), induces platelet aggregation through its interaction with GPIb (GP1BA/GP1BB), and activates factor VIII (F8). The polypeptide is Thrombin-like enzyme bothrombin (Bothrops jararaca (Jararaca)).